A 559-amino-acid chain; its full sequence is Estrogen receptor beta (559 aa).

Residues 1–155 form a modulating region; it reads MAVACSPEKD…SSGGKADLHF (155 aa). The disordered stretch occupies residues 128-148; that stretch reads TSSKSARRRSQENEEGEVSSG. 2 NR C4-type zinc fingers span residues 156–176 and 192–216; these read CAVC…CEGC and CPAT…LHKC. Positions 156-221 form a DNA-binding region, nuclear receptor; that stretch reads CAVCHDYASG…RLHKCYNVGM (66 aa). The segment covering 243 to 254 has biased composition (polar residues); it reads RLSSQGRTSGPS. The interval 243–269 is disordered; sequence RLSSQGRTSGPSVLNGPAVGPLNTPQP. The NR LBD domain maps to 273-509; sequence TSKQLIERIM…DLLLEMLDAH (237 aa). Residues 514-559 form a disordered region; it reads SRLPRRSPQQETVEQCDAPARPHSPGTSGPTNTWTPSCTGGRGEPQ. Positions 538-551 are enriched in polar residues; that stretch reads PGTSGPTNTWTPSC.

Belongs to the nuclear hormone receptor family. NR3 subfamily. Binds DNA as a homodimer. Can form a heterodimer with ER-alpha.

The protein resides in the nucleus. Its function is as follows. Binds estrogens with an affinity similar to that of ER-alpha, and activates expression of reporter genes containing estrogen response elements (ERE) in an estrogen-dependent manner. This is Estrogen receptor beta (esr2) from Sparus aurata (Gilthead sea bream).